A 338-amino-acid chain; its full sequence is Tagatose 1,6-diphosphate aldolase (338 aa).

This sequence belongs to the aldolase LacD family.

The enzyme catalyses D-tagatofuranose 1,6-bisphosphate = D-glyceraldehyde 3-phosphate + dihydroxyacetone phosphate. It functions in the pathway carbohydrate metabolism; D-tagatose 6-phosphate degradation; D-glyceraldehyde 3-phosphate and glycerone phosphate from D-tagatose 6-phosphate: step 2/2. The protein is Tagatose 1,6-diphosphate aldolase of Listeria innocua serovar 6a (strain ATCC BAA-680 / CLIP 11262).